The sequence spans 580 residues: Probable inositol transporter 2 (580 aa).

Helical transmembrane passes span 36-56 (GIGG…LLYI), 71-91 (EMIV…GGWA), 106-126 (FLFL…LLVV), 129-149 (VFVG…ISEA), 156-176 (GALV…SYLI), 189-209 (WMLG…FTLP), 275-295 (GLIA…NTVM), 315-335 (LLSL…IYFI), 343-363 (LLII…GVFY), 452-472 (FGWF…PGMG), 490-510 (ICGG…AQSF), and 521-541 (WTFL…MVCV).

The protein belongs to the major facilitator superfamily. Sugar transporter (TC 2.A.1.1) family. Expressed in the tapetum, but not in pollen grains. Detected in leaf vascular tissue and in roots.

The protein localises to the cell membrane. Its activity is regulated as follows. Inhibited by nickel and to a lesser extent by cobalt. Its function is as follows. Plasma membrane inositol-proton symporter. Specific for several inositol epimers, such as myoinositol and scylloinositol. D-chiroinositol, mucoinositol, alloinositol and pinitol are also transported with a lower activity. Not active with galactinol and phytate. This Arabidopsis thaliana (Mouse-ear cress) protein is Probable inositol transporter 2 (INT2).